Here is a 97-residue protein sequence, read N- to C-terminus: Acylphosphatase (97 aa).

One can recognise an Acylphosphatase-like domain in the interval 11 to 97 (TYYVRVRGTV…EKRYERFEQH (87 aa)). Residues arginine 26 and asparagine 44 contribute to the active site. The tract at residues 76 to 97 (RVTEVSGEERSTEKRYERFEQH) is disordered. Basic and acidic residues predominate over residues 82-97 (GEERSTEKRYERFEQH).

The protein belongs to the acylphosphatase family.

It catalyses the reaction an acyl phosphate + H2O = a carboxylate + phosphate + H(+). This is Acylphosphatase (acyP) from Paraburkholderia xenovorans (strain LB400).